Consider the following 224-residue polypeptide: Transmembrane protein C16orf54 (224 aa).

O-linked (GalNAc...) threonine glycosylation occurs at T4. A helical transmembrane segment spans residues 32–52; that stretch reads IPIMLVLATLAALFILTTAVL. Disordered stretches follow at residues 104–138 and 152–203; these read TDRA…SNLG and WGPQ…GLQP. Phosphothreonine is present on residues T112 and T116. S194 carries the post-translational modification Phosphoserine.

O-glycosylated with core 1 or possibly core 8 glycans.

It is found in the membrane. This is Transmembrane protein C16orf54 (C16orf54) from Homo sapiens (Human).